Consider the following 107-residue polypeptide: MMKGGLAGLMKQAQQMQEKMKTTQAELAALEVTGQAAGGLVKVTISGKYELKRVQIDPGAMDDREMLEDLIVTAYTEAFKQVEAASAQMMSGATAGMPMPPGFKLPF.

This sequence belongs to the YbaB/EbfC family. In terms of assembly, homodimer.

The protein resides in the cytoplasm. It localises to the nucleoid. Its function is as follows. Binds to DNA and alters its conformation. May be involved in regulation of gene expression, nucleoid organization and DNA protection. The polypeptide is Nucleoid-associated protein Pnec_0645 (Polynucleobacter necessarius subsp. necessarius (strain STIR1)).